We begin with the raw amino-acid sequence, 856 residues long: DNA mismatch repair protein MutS (856 aa).

618–625 (GPNMGGKS) is an ATP binding site.

This sequence belongs to the DNA mismatch repair MutS family.

Functionally, this protein is involved in the repair of mismatches in DNA. It is possible that it carries out the mismatch recognition step. This protein has a weak ATPase activity. In Shewanella baltica (strain OS223), this protein is DNA mismatch repair protein MutS.